Consider the following 236-residue polypeptide: 27 kDa hemolymph protein (236 aa).

The first 17 residues, 1-17, serve as a signal peptide directing secretion; that stretch reads MMWKLIIVTILAVGVLC.

In terms of assembly, monomer. As to expression, hemolymph.

It localises to the secreted. In Galleria mellonella (Greater wax moth), this protein is 27 kDa hemolymph protein.